Consider the following 172-residue polypeptide: Immune protein Tsi1 (172 aa).

A signal peptide spans 1-19 (MKLLAGSFAALFLSLSAQA). Cystine bridges form between C22-C167, C79-C121, and C147-C155.

Forms a heterotetramer with Tse1 consisting of two Tse1 dimers and two Tsi1 dimers. Formation of the complex inactivates Tse1 enzymatic activity.

Immunity protein that plays a role in preventing early activation of toxin Tse1. Binds to a large surface of Tse1 and thereby occludes the active site to specifically inhibits enzyme activity by forming a hydrogen bond with the catalytic diad. The chain is Immune protein Tsi1 from Pseudomonas aeruginosa (strain ATCC 15692 / DSM 22644 / CIP 104116 / JCM 14847 / LMG 12228 / 1C / PRS 101 / PAO1).